Reading from the N-terminus, the 580-residue chain is E3 ubiquitin-protein ligase TRIM45 (580 aa).

The RING-type zinc finger occupies 29–98 (CPLCMGLFKA…QIGILCPVCD (70 aa)). 2 B box-type zinc fingers span residues 130 to 176 (GQGL…MVDL) and 186 to 227 (GKPI…CDFT). The Zn(2+) site is built by C135, C138, C158, H162, C191, H194, C214, and H219. A coiled-coil region spans residues 281–335 (SEGYIKAIEEHRDKLLKQLEDIRVQKENSLQLQKAQLEQLLADMRTGVEFTEHLL). The Filamin repeat unit spans residues 394–497 (TKEVDPAKCV…VQGSPFTVTV (104 aa)).

Belongs to the TRIM/RBCC family.

Its subcellular location is the cytoplasm. It is found in the nucleus. It carries out the reaction S-ubiquitinyl-[E2 ubiquitin-conjugating enzyme]-L-cysteine + [acceptor protein]-L-lysine = [E2 ubiquitin-conjugating enzyme]-L-cysteine + N(6)-ubiquitinyl-[acceptor protein]-L-lysine.. Its function is as follows. E3 ubiquitin-protein ligase that plays a role in the regulation of inflammatory response. Mechanistically, mediates the 'Lys-48'-linked polyubiquitination of TAB2, a regulatory protein of the kinase TAK1, leading to its degradation via the proteasomal pathway and inhibition of the TLR-mediated inflammatory immune response. May act as a transcriptional repressor in mitogen-activated protein kinase signaling pathway. The protein is E3 ubiquitin-protein ligase TRIM45 (TRIM45) of Bos taurus (Bovine).